The sequence spans 258 residues: MTFLAIDVGNTRLKWALFDAAQPGAGLLAHGAEFLDHIERLAEGPWSHLPAPRHMLGCVVAGDAVKRRVAEQMELWDVPARWVVPSAQEAGVINGYDHPTRLGADRWVAMIGARHRLLAQGPARPLIVVMVGTAVTVEALDAEGRFLGGLILPGHGIMLRALESGTAGLHVPTGEVRLFPSNTSDALTSGGTYAIAGAVERMYQHLRQHCGQEPACMMTGGAGWKMAPSMTRPFELVENLIFDGLLEIAARRFAELPA.

7 to 14 serves as a coordination point for ATP; sequence DVGNTRLK. Residues Tyr-96 and 103–106 contribute to the substrate site; that span reads GADR. The active-site Proton acceptor is the Asp-105. Residue Thr-133 coordinates ATP. Thr-183 lines the substrate pocket.

Belongs to the type III pantothenate kinase family. In terms of assembly, homodimer. It depends on NH4(+) as a cofactor. The cofactor is K(+).

The protein localises to the cytoplasm. It carries out the reaction (R)-pantothenate + ATP = (R)-4'-phosphopantothenate + ADP + H(+). Its pathway is cofactor biosynthesis; coenzyme A biosynthesis; CoA from (R)-pantothenate: step 1/5. Functionally, catalyzes the phosphorylation of pantothenate (Pan), the first step in CoA biosynthesis. The sequence is that of Type III pantothenate kinase from Acidovorax ebreus (strain TPSY) (Diaphorobacter sp. (strain TPSY)).